Here is a 502-residue protein sequence, read N- to C-terminus: ATP synthase subunit alpha (502 aa).

169–176 (GDRQTGKT) contacts ATP.

The protein belongs to the ATPase alpha/beta chains family. In terms of assembly, F-type ATPases have 2 components, CF(1) - the catalytic core - and CF(0) - the membrane proton channel. CF(1) has five subunits: alpha(3), beta(3), gamma(1), delta(1), epsilon(1). CF(0) has three main subunits: a(1), b(2) and c(9-12). The alpha and beta chains form an alternating ring which encloses part of the gamma chain. CF(1) is attached to CF(0) by a central stalk formed by the gamma and epsilon chains, while a peripheral stalk is formed by the delta and b chains.

It localises to the cell inner membrane. The enzyme catalyses ATP + H2O + 4 H(+)(in) = ADP + phosphate + 5 H(+)(out). Functionally, produces ATP from ADP in the presence of a proton gradient across the membrane. The alpha chain is a regulatory subunit. This chain is ATP synthase subunit alpha, found in Trichlorobacter lovleyi (strain ATCC BAA-1151 / DSM 17278 / SZ) (Geobacter lovleyi).